We begin with the raw amino-acid sequence, 369 residues long: S-adenosylmethionine decarboxylase proenzyme 2 (369 aa).

Residues glutamate 9 and glutamate 12 contribute to the active site. Residue serine 69 is the Schiff-base intermediate with substrate; via pyruvic acid of the active site. Serine 69 is subject to Pyruvic acid (Ser); by autocatalysis. Cysteine 83 functions as the Proton donor; for catalytic activity in the catalytic mechanism. Active-site proton acceptor; for processing activity residues include serine 236 and histidine 249.

This sequence belongs to the eukaryotic AdoMetDC family. Requires pyruvate as cofactor. Is synthesized initially as an inactive proenzyme. Formation of the active enzyme involves a self-maturation process in which the active site pyruvoyl group is generated from an internal serine residue via an autocatalytic post-translational modification. Two non-identical subunits are generated from the proenzyme in this reaction, and the pyruvate is formed at the N-terminus of the alpha chain, which is derived from the carboxyl end of the proenzyme. The post-translation cleavage follows an unusual pathway, termed non-hydrolytic serinolysis, in which the side chain hydroxyl group of the serine supplies its oxygen atom to form the C-terminus of the beta chain, while the remainder of the serine residue undergoes an oxidative deamination to produce ammonia and the pyruvoyl group blocking the N-terminus of the alpha chain.

The catalysed reaction is S-adenosyl-L-methionine + H(+) = S-adenosyl 3-(methylsulfanyl)propylamine + CO2. The protein operates within amine and polyamine biosynthesis; S-adenosylmethioninamine biosynthesis; S-adenosylmethioninamine from S-adenosyl-L-methionine: step 1/1. The sequence is that of S-adenosylmethionine decarboxylase proenzyme 2 (SAMDC2) from Brassica juncea (Indian mustard).